The primary structure comprises 678 residues: ABC transporter F family member 2 (678 aa).

ABC transporter domains are found at residues 84–342 (VRLE…EAQY) and 411–626 (VTVK…AREL). ATP-binding positions include 116 to 123 (GVNGAGKT) and 443 to 450 (GPNGCGKS). The tract at residues 630–678 (AELEEKAPKVKAKSKMSKAEREARKKQKMKAFQASKKKSKSSKNAKRWN) is disordered. Basic residues predominate over residues 653–678 (RKKQKMKAFQASKKKSKSSKNAKRWN).

The protein belongs to the ABC transporter superfamily. ABCF family. EF3 (TC 3.A.1.121) subfamily.

This chain is ABC transporter F family member 2 (ABCF2), found in Arabidopsis thaliana (Mouse-ear cress).